The following is a 28-amino-acid chain: Dolichyl-diphosphooligosaccharide--protein glycosyltransferase subunit 1 (28 aa).

This sequence belongs to the OST1 family. Component of the oligosaccharyltransferase (OST) complex.

The protein resides in the endoplasmic reticulum membrane. It functions in the pathway protein modification; protein glycosylation. In terms of biological role, subunit of the oligosaccharyl transferase (OST) complex that catalyzes the initial transfer of a defined glycan (Glc(3)Man(9)GlcNAc(2) in eukaryotes) from the lipid carrier dolichol-pyrophosphate to an asparagine residue within an Asn-X-Ser/Thr consensus motif in nascent polypeptide chains, the first step in protein N-glycosylation. N-glycosylation occurs cotranslationally and the complex associates with the Sec61 complex at the channel-forming translocon complex that mediates protein translocation across the endoplasmic reticulum (ER). All subunits are required for a maximal enzyme activity. This is Dolichyl-diphosphooligosaccharide--protein glycosyltransferase subunit 1 from Gallus gallus (Chicken).